The following is a 346-amino-acid chain: uncharacterized protein (346 aa).

This is an uncharacterized protein from Mycoplasma genitalium (strain ATCC 33530 / DSM 19775 / NCTC 10195 / G37) (Mycoplasmoides genitalium).